A 106-amino-acid chain; its full sequence is 1-deoxy-D-xylulose 5-phosphate reductoisomerase (106 aa).

D3 lines the Mn(2+) pocket. S4, E5, S29, H52, S65, N70, K71, and E74 together coordinate 1-deoxy-D-xylulose 5-phosphate. Mn(2+) is bound at residue E5. Residue E74 participates in Mn(2+) binding.

It belongs to the DXR family. Requires Mn(2+) as cofactor. The cofactor is Mg(2+).

It localises to the plastid. The protein localises to the chloroplast stroma. It carries out the reaction 2-C-methyl-D-erythritol 4-phosphate + NADP(+) = 1-deoxy-D-xylulose 5-phosphate + NADPH + H(+). The protein operates within isoprenoid biosynthesis; isopentenyl diphosphate biosynthesis via DXP pathway; isopentenyl diphosphate from 1-deoxy-D-xylulose 5-phosphate: step 1/6. Enzyme of the plastid non-mevalonate pathway for isoprenoid biosynthesis that catalyzes the NADPH-dependent rearrangement and reduction of 1-deoxy-D-xylulose-5-phosphate (DXP) to 2-C-methyl-D-erythritol 4-phosphate (MEP). Required for chloroplast development. This Origanum vulgare (Wild marjoram) protein is 1-deoxy-D-xylulose 5-phosphate reductoisomerase.